Here is a 325-residue protein sequence, read N- to C-terminus: Phosphate acyltransferase (325 aa).

Belongs to the PlsX family. In terms of assembly, homodimer. Probably interacts with PlsY.

The protein resides in the cytoplasm. The catalysed reaction is a fatty acyl-[ACP] + phosphate = an acyl phosphate + holo-[ACP]. Its pathway is lipid metabolism; phospholipid metabolism. In terms of biological role, catalyzes the reversible formation of acyl-phosphate (acyl-PO(4)) from acyl-[acyl-carrier-protein] (acyl-ACP). This enzyme utilizes acyl-ACP as fatty acyl donor, but not acyl-CoA. This Mycoplasmopsis pulmonis (strain UAB CTIP) (Mycoplasma pulmonis) protein is Phosphate acyltransferase.